The primary structure comprises 457 residues: Adenylosuccinate synthetase isozyme 1 (457 aa).

The tract at residues 1-25 (MSGTRASNDRPPSAGGVKRGRLQHE) is disordered. GTP-binding positions include 42-48 (GDEGKGK) and 70-72 (GHT). Asp43 acts as the Proton acceptor in catalysis. Residues Asp43 and Gly70 each coordinate Mg(2+). Asp43 serves as a coordination point for substrate. Residues 43–46 (DEGK), 68–71 (NAGH), Thr163, Arg177, Asn256, Thr271, and Arg335 contribute to the IMP site. Residue His71 is the Proton donor of the active site. 331–337 (VTTGRKR) contacts substrate. Residues Arg337, 363-365 (KLD), and 445-448 (GVGK) contribute to the GTP site.

The protein belongs to the adenylosuccinate synthetase family. Homodimer. Mg(2+) serves as cofactor. Predominantly expressed in the striated muscle tissues.

It is found in the cytoplasm. It carries out the reaction IMP + L-aspartate + GTP = N(6)-(1,2-dicarboxyethyl)-AMP + GDP + phosphate + 2 H(+). Its pathway is purine metabolism; AMP biosynthesis via de novo pathway; AMP from IMP: step 1/2. Component of the purine nucleotide cycle (PNC), which interconverts IMP and AMP to regulate the nucleotide levels in various tissues, and which contributes to glycolysis and ammoniagenesis. Catalyzes the first committed step in the biosynthesis of AMP from IMP. This Sus scrofa (Pig) protein is Adenylosuccinate synthetase isozyme 1.